The following is a 172-amino-acid chain: Transcriptional regulator CdrL (172 aa).

Positions 72–113 (SPSAVEEVRTTPASGGRADAEEPGDDGETDAEHADTSATGDE) are disordered. The DZANK-type zinc-finger motif lies at 116 to 160 (CSQCGAELSADHVYCPNCGGKATHRVFCECGDEIRADWAFCPRCG).

This sequence belongs to the CdrL family.

It localises to the cytoplasm. Its function is as follows. Transcriptional regulator involved in the control of cell division. The sequence is that of Transcriptional regulator CdrL from Halobacterium salinarum (strain ATCC 29341 / DSM 671 / R1).